A 463-amino-acid chain; its full sequence is Trigger factor (463 aa).

The region spanning 162-243 is the PPIase FKBP-type domain; sequence GDVVTLDLEA…VSQVAARELP (82 aa). Residues 427–463 are disordered; that stretch reads TNGEIVDLDDEDETESTPETTEAAEAAEESTEDKPEA. Acidic residues predominate over residues 432–442; it reads VDLDDEDETES.

This sequence belongs to the FKBP-type PPIase family. Tig subfamily.

The protein resides in the cytoplasm. The enzyme catalyses [protein]-peptidylproline (omega=180) = [protein]-peptidylproline (omega=0). Its function is as follows. Involved in protein export. Acts as a chaperone by maintaining the newly synthesized protein in an open conformation. Functions as a peptidyl-prolyl cis-trans isomerase. In Streptomyces avermitilis (strain ATCC 31267 / DSM 46492 / JCM 5070 / NBRC 14893 / NCIMB 12804 / NRRL 8165 / MA-4680), this protein is Trigger factor.